The primary structure comprises 127 residues: Holo-[acyl-carrier-protein] synthase (127 aa).

D8 and E56 together coordinate Mg(2+).

Belongs to the P-Pant transferase superfamily. AcpS family. It depends on Mg(2+) as a cofactor.

The protein resides in the cytoplasm. It catalyses the reaction apo-[ACP] + CoA = holo-[ACP] + adenosine 3',5'-bisphosphate + H(+). In terms of biological role, transfers the 4'-phosphopantetheine moiety from coenzyme A to a Ser of acyl-carrier-protein. This chain is Holo-[acyl-carrier-protein] synthase, found in Cytophaga hutchinsonii (strain ATCC 33406 / DSM 1761 / CIP 103989 / NBRC 15051 / NCIMB 9469 / D465).